The following is a 685-amino-acid chain: Polyphosphate kinase (685 aa).

An ATP-binding site is contributed by Asn-45. Residues Arg-375 and Arg-405 each coordinate Mg(2+). Catalysis depends on His-435, which acts as the Phosphohistidine intermediate. ATP contacts are provided by Tyr-468, Arg-564, and His-592.

Belongs to the polyphosphate kinase 1 (PPK1) family. Mg(2+) serves as cofactor. An intermediate of this reaction is the autophosphorylated ppk in which a phosphate is covalently linked to a histidine residue through a N-P bond.

The catalysed reaction is [phosphate](n) + ATP = [phosphate](n+1) + ADP. Catalyzes the reversible transfer of the terminal phosphate of ATP to form a long-chain polyphosphate (polyP). This Neisseria meningitidis serogroup A / serotype 4A (strain DSM 15465 / Z2491) protein is Polyphosphate kinase.